We begin with the raw amino-acid sequence, 80 residues long: Small ribosomal subunit protein bS18 (80 aa).

Belongs to the bacterial ribosomal protein bS18 family. As to quaternary structure, part of the 30S ribosomal subunit. Forms a tight heterodimer with protein bS6.

Functionally, binds as a heterodimer with protein bS6 to the central domain of the 16S rRNA, where it helps stabilize the platform of the 30S subunit. This chain is Small ribosomal subunit protein bS18, found in Staphylococcus aureus (strain Mu3 / ATCC 700698).